Consider the following 416-residue polypeptide: Iron/alpha-ketoglutarate-dependent dioxygenase asqJ (416 aa).

The tract at residues 1 to 53 (MGYPKAFTSSDSEPEPDLSRDLGNPVMGNPGVVSRSSSTVAQHSVRNNPTGPD) is disordered. The segment covering 34–50 (SRSSSTVAQHSVRNNPT) has biased composition (polar residues). Positions 242, 244, and 319 each coordinate Fe cation.

Belongs to the PhyH family. Homodimer. Requires Fe cation as cofactor.

It carries out the reaction (-)-4'-methoxycyclopeptine + 2-oxoglutarate + O2 = (Z)-4'-methoxydehydrocyclopeptine + succinate + CO2 + H2O. It catalyses the reaction (Z)-4'-methoxydehydrocyclopeptine + 2-oxoglutarate + O2 = (-)-4'-methoxycyclopenine + succinate + CO2. The catalysed reaction is (-)-cyclopeptine + 2-oxoglutarate + O2 = (Z)-dehydrocyclopeptine + succinate + CO2 + H2O. The enzyme catalyses (Z)-dehydrocyclopeptine + 2-oxoglutarate + O2 = (-)-cyclopenine + succinate + CO2. The protein operates within secondary metabolite biosynthesis. It participates in alkaloid biosynthesis. It functions in the pathway mycotoxin biosynthesis. Iron/alpha-ketoglutarate-dependent dioxygenase; part of the gene cluster that mediates the biosynthesis of the aspoquinolone mycotoxins. Within the pathway, the iron/alpha-ketoglutarate-dependent dioxygenase asqJ acts as a (-)-cyclopenine synthase that converts 4'-methoxycyclopeptin into 4'-methoxydehydrocyclopeptin through dehydrogenation to form a double bond between C-alpha and C-beta of the O-methyltyrosine side chain. AsqJ is a very unique dioxygenase which is capable of catalyzing radical-mediated dehydrogenation and epoxidation reactions sequentially on a 6,7-benzo-diazepinedione substrate in the 4'-methoxyviridicatin biosynthetic pathway. AsqJ is also capable of converting cyclopeptin into dehydrocyclopeptin. The first step of the pathway is catalyzed by the nonribosomal peptide synthetase asqK that condenses anthranilic acid and O-methyl-L-tyrosine to produce 4'-methoxycyclopeptin. 4'-methoxycyclopeptin is then converted to 4'-methoxydehydrocyclopeptin by the ketoglutarate-dependent dioxygenase asqJ. AsqJ also converts its first product 4'-methoxydehydrocyclopeptin to 4'-methoxycyclopenin. The following conversion of 4'-methoxycyclopenin into 4'-methoxyviridicatin is catalyzed by the cyclopenase asqI. 4'-methoxyviridicatin is the precursor of quinolone natural products, and is further converted to quinolinone B. The prenyltransferase asqH1 then catalyzes the canonical Friedel-Crafts alkylation of quinolinone B with dimethylallyl cation to yield dimethylallyl quinolone, which is subjected to FAD-dependent dehydrogenation by the FAD-linked oxidoreductase asqF to yield conjugated aryl diene. The delta(3') double bond then serves as the site of the second alkylation with DMAPP catalyzed by the prenyltransferase asqH2 to yield a carbenium ion intermediate, which can be attacked by H(2)O to yield a styrenyl quinolone containing a C3'-hydroxyprenyl chain. The FAD-dependent monooxygenase asqG performs epoxidation of the terminal C7'-C8' olefin. Finally, after dehydratation of the epoxide at C3 by asqC, the quinolone epoxide rearrangement protein asqO catalyzes an enzymatic 3-exo-tet cyclization to yield the cyclopropyl-THF ring system in aspoquinolone. The polypeptide is Iron/alpha-ketoglutarate-dependent dioxygenase asqJ (Emericella nidulans (strain FGSC A4 / ATCC 38163 / CBS 112.46 / NRRL 194 / M139) (Aspergillus nidulans)).